Consider the following 45-residue polypeptide: Photosystem II reaction center protein K (45 aa).

A propeptide spanning residues 1–8 (MLMSLFLA) is cleaved from the precursor. The helical transmembrane segment at 23-43 (ILPIIPLFFLLLAFVWQAAIG) threads the bilayer.

This sequence belongs to the PsbK family. PSII is composed of 1 copy each of membrane proteins PsbA, PsbB, PsbC, PsbD, PsbE, PsbF, PsbH, PsbI, PsbJ, PsbK, PsbL, PsbM, PsbT, PsbX, PsbY, PsbZ, Psb30/Ycf12, at least 3 peripheral proteins of the oxygen-evolving complex and a large number of cofactors. It forms dimeric complexes.

The protein resides in the plastid. The protein localises to the cyanelle thylakoid membrane. Its function is as follows. One of the components of the core complex of photosystem II (PSII). PSII is a light-driven water:plastoquinone oxidoreductase that uses light energy to abstract electrons from H(2)O, generating O(2) and a proton gradient subsequently used for ATP formation. It consists of a core antenna complex that captures photons, and an electron transfer chain that converts photonic excitation into a charge separation. The polypeptide is Photosystem II reaction center protein K (Cyanophora paradoxa).